A 448-amino-acid chain; its full sequence is MFQALSDGFKNALNKIRFQDDEKALDRALDELKKTLLKNDVHHKVARELLKKVESQTKAGGIGKQQFLDALEKSLLEILSAKGSSGFTFAQTPPTVVLMAGLQGSGKTTTTAKLAHYLKTKNKKVLLCACDLQRLAAVEQLKVLGEQVGVEVFHEENKSVKEIANNALKRAKEAQFDVLIVDSAGRLAIDKELMQELKEVKEVLNPHEVLYVADALSGQDGVKSANTFNEEIGVSGVVLSKFDSDSKGGIALGITYQLGLPLRFIGSGEKIPDLDVFMPERIVGRLMGAGDIISLAEKTASVLNPNEAKDLSKKLKKGQFTFNDFLNQIEKVKKLGSMSSLISMIPGLGNMASALKDTDLESSLEVKKIKAMVNSMTKKERENPEILNGSRRKRIALGSGLEVSEINRIIKRFDQASKMAKRLTNKKGISDLMNLMSQAKNQTPPKMR.

GTP is bound by residues 101 to 108 (GLQGSGKT), 182 to 186 (DSAGR), and 240 to 243 (SKFD).

It belongs to the GTP-binding SRP family. SRP54 subfamily. As to quaternary structure, part of the signal recognition particle protein translocation system, which is composed of SRP and FtsY. SRP is a ribonucleoprotein composed of Ffh and a 4.5S RNA molecule.

It is found in the cytoplasm. The catalysed reaction is GTP + H2O = GDP + phosphate + H(+). Involved in targeting and insertion of nascent membrane proteins into the cytoplasmic membrane. Binds to the hydrophobic signal sequence of the ribosome-nascent chain (RNC) as it emerges from the ribosomes. The SRP-RNC complex is then targeted to the cytoplasmic membrane where it interacts with the SRP receptor FtsY. Interaction with FtsY leads to the transfer of the RNC complex to the Sec translocase for insertion into the membrane, the hydrolysis of GTP by both Ffh and FtsY, and the dissociation of the SRP-FtsY complex into the individual components. This chain is Signal recognition particle protein, found in Helicobacter pylori (strain J99 / ATCC 700824) (Campylobacter pylori J99).